Here is a 265-residue protein sequence, read N- to C-terminus: Glutamate racemase (265 aa).

Residues 10–11 (DS) and 42–43 (YG) contribute to the substrate site. Catalysis depends on Cys73, which acts as the Proton donor/acceptor. 74 to 75 (NT) is a substrate binding site. The Proton donor/acceptor role is filled by Cys184. 185-186 (TH) is a substrate binding site.

This sequence belongs to the aspartate/glutamate racemases family.

It carries out the reaction L-glutamate = D-glutamate. The protein operates within cell wall biogenesis; peptidoglycan biosynthesis. Functionally, provides the (R)-glutamate required for cell wall biosynthesis. This Pediococcus pentosaceus (strain ATCC 25745 / CCUG 21536 / LMG 10740 / 183-1w) protein is Glutamate racemase.